Here is a 194-residue protein sequence, read N- to C-terminus: Fe/S biogenesis protein NfuA (194 aa).

Positions 152 and 155 each coordinate [4Fe-4S] cluster.

It belongs to the NfuA family. As to quaternary structure, homodimer. [4Fe-4S] cluster serves as cofactor.

Involved in iron-sulfur cluster biogenesis. Binds a 4Fe-4S cluster, can transfer this cluster to apoproteins, and thereby intervenes in the maturation of Fe/S proteins. Could also act as a scaffold/chaperone for damaged Fe/S proteins. The polypeptide is Fe/S biogenesis protein NfuA (Pseudomonas entomophila (strain L48)).